Reading from the N-terminus, the 496-residue chain is Protein RepR (496 aa).

Residues 120–141 (SDILTTAIDLGFMPTLIIKSDK) mediate DNA binding.

Functionally, essential for replication. In Streptococcus agalactiae, this protein is Protein RepR (repR).